A 545-amino-acid polypeptide reads, in one-letter code: Phenylalanine--tRNA ligase beta subunit (545 aa).

A B5 domain is found at 266-342 (LSPALRNINV…IGAGFGNLEA (77 aa)). Aspartate 320, aspartate 326, glutamate 329, and aspartate 330 together coordinate Mg(2+).

This sequence belongs to the phenylalanyl-tRNA synthetase beta subunit family. Type 2 subfamily. As to quaternary structure, tetramer of two alpha and two beta subunits. Mg(2+) serves as cofactor.

Its subcellular location is the cytoplasm. It catalyses the reaction tRNA(Phe) + L-phenylalanine + ATP = L-phenylalanyl-tRNA(Phe) + AMP + diphosphate + H(+). The polypeptide is Phenylalanine--tRNA ligase beta subunit (Methanospirillum hungatei JF-1 (strain ATCC 27890 / DSM 864 / NBRC 100397 / JF-1)).